We begin with the raw amino-acid sequence, 572 residues long: Proline--tRNA ligase (572 aa).

Belongs to the class-II aminoacyl-tRNA synthetase family. ProS type 1 subfamily. Homodimer.

The protein resides in the cytoplasm. It carries out the reaction tRNA(Pro) + L-proline + ATP = L-prolyl-tRNA(Pro) + AMP + diphosphate. Catalyzes the attachment of proline to tRNA(Pro) in a two-step reaction: proline is first activated by ATP to form Pro-AMP and then transferred to the acceptor end of tRNA(Pro). As ProRS can inadvertently accommodate and process non-cognate amino acids such as alanine and cysteine, to avoid such errors it has two additional distinct editing activities against alanine. One activity is designated as 'pretransfer' editing and involves the tRNA(Pro)-independent hydrolysis of activated Ala-AMP. The other activity is designated 'posttransfer' editing and involves deacylation of mischarged Ala-tRNA(Pro). The misacylated Cys-tRNA(Pro) is not edited by ProRS. The chain is Proline--tRNA ligase from Caldicellulosiruptor bescii (strain ATCC BAA-1888 / DSM 6725 / KCTC 15123 / Z-1320) (Anaerocellum thermophilum).